The chain runs to 256 residues: Nuclear shuttle protein (256 aa).

Polar residues predominate over residues 1–16; that stretch reads MYSTSNRRGRSQTQRG. The interval 1 to 46 is disordered; that stretch reads MYSTSNRRGRSQTQRGSHVRRTGVKRSYGAARGDDRRRPNVVSKTQ. The Bipartite nuclear localization signal signature appears at 21 to 42; sequence RTGVKRSYGAARGDDRRRPNVV. Positions 81–96 match the Nuclear localization signal motif; it reads SYVKTVPNRTRTYIKL. Positions 150-187 are interaction with Arabidopsis thaliana NSI protein; sequence ELFGARIHCHGNLSVVPALKDRYYIRHVTKRVVSLEKD. The Nuclear export signal signature appears at 177-198; that stretch reads VTKRVVSLEKDTLLIDLHGTTQ.

Belongs to the begomovirus nuclear shuttle protein family. In terms of assembly, binds to single-stranded and double-stranded viral DNA. Interacts with the host nuclear shuttle interacting (NSI) protein. This interaction may allow NSP to recruit NSI monomers to the viral genome and thus regulate nuclear export of viral genome by NSP.

The protein resides in the host nucleus. It is found in the host cytoplasm. Its subcellular location is the host cell membrane. Its function is as follows. Binds to the genomic viral ssDNA, shuttles it into and out of the cell nucleus. Begomoviruses use 2 proteins to transport their DNA from cell to cell. The nuclear shuttle protein (NSP) shuttles it between nucleus and cytoplasm and the movement protein (MP) probably transports the DNA-NSP complex to the cell periphery and facilitates movement across the cell wall. This is Nuclear shuttle protein from Squash leaf curl virus (SLCV).